The sequence spans 293 residues: N(1)-aminopropylagmatine ureohydrolase (293 aa).

Mn(2+) is bound by residues His105, Asp128, His130, Asp132, Asp210, and Asp212.

The protein belongs to the arginase family. Requires Mn(2+) as cofactor.

The catalysed reaction is N(1)-(3-aminopropyl)agmatine + H2O = urea + spermidine. It participates in amine and polyamine biosynthesis; spermidine biosynthesis. In terms of biological role, involved in the biosynthesis of polyamines which are thought to support the growth of thermophilic microorganisms under high-temperature conditions. It seems that long-chain and branched-chain of polyamines effectively stabilize DNA and RNA, respectively. Catalyzes the decarboxylation of N1-(3-aminopropyl)agmatine to yield spermidine and urea. Does not act on agmatine. This Thermus thermophilus (strain ATCC BAA-163 / DSM 7039 / HB27) protein is N(1)-aminopropylagmatine ureohydrolase.